Consider the following 894-residue polypeptide: Sorting nexin-14 (894 aa).

Positions Ser78–Pro252 constitute a PXA domain. The RGS domain occupies Glu284 to Leu416. Residue Ser496 is modified to Phosphoserine. Residues Pro518–Thr638 form the PX domain.

Belongs to the sorting nexin family.

It is found in the cytoplasm. Its subcellular location is the cell projection. It localises to the dendrite. Its function is as follows. Plays a role in maintaining normal neuronal excitability and synaptic transmission. May be involved in several stages of intracellular trafficking. The protein is Sorting nexin-14 (SNX14) of Pongo abelii (Sumatran orangutan).